The primary structure comprises 403 residues: Succinoglycan biosynthesis protein ExoL (403 aa).

The protein resides in the cytoplasm. It participates in glycan metabolism; exopolysaccharide biosynthesis. Functionally, essential for succinoglycan (EPS I) synthesis and nodule infection. Glycosyltransferase needed for the addition of the third sugar (glucose), catalyzes the formation of a beta-1,4 linkage between the second and third sugars. The protein is Succinoglycan biosynthesis protein ExoL (exoL) of Rhizobium meliloti (strain 1021) (Ensifer meliloti).